The following is a 570-amino-acid chain: Sulfite reductase [NADPH] hemoprotein beta-component (570 aa).

[4Fe-4S] cluster is bound by residues Cys434, Cys440, Cys479, and Cys483. Cys483 provides a ligand contact to siroheme.

Belongs to the nitrite and sulfite reductase 4Fe-4S domain family. As to quaternary structure, alpha(8)-beta(8). The alpha component is a flavoprotein, the beta component is a hemoprotein. Siroheme is required as a cofactor. The cofactor is [4Fe-4S] cluster.

It catalyses the reaction hydrogen sulfide + 3 NADP(+) + 3 H2O = sulfite + 3 NADPH + 4 H(+). It functions in the pathway sulfur metabolism; hydrogen sulfide biosynthesis; hydrogen sulfide from sulfite (NADPH route): step 1/1. Functionally, component of the sulfite reductase complex that catalyzes the 6-electron reduction of sulfite to sulfide. This is one of several activities required for the biosynthesis of L-cysteine from sulfate. This chain is Sulfite reductase [NADPH] hemoprotein beta-component, found in Shigella flexneri serotype 5b (strain 8401).